We begin with the raw amino-acid sequence, 941 residues long: Isoleucine--tRNA ligase (941 aa).

Residues 59 to 69 (PYANGNIHIGH) carry the 'HIGH' region motif. Glutamate 562 serves as a coordination point for L-isoleucyl-5'-AMP. The 'KMSKS' region signature appears at 603-607 (KMSKS). An ATP-binding site is contributed by lysine 606. Zn(2+) is bound by residues cysteine 904, cysteine 907, cysteine 924, and cysteine 927.

The protein belongs to the class-I aminoacyl-tRNA synthetase family. IleS type 1 subfamily. In terms of assembly, monomer. The cofactor is Zn(2+).

It is found in the cytoplasm. The catalysed reaction is tRNA(Ile) + L-isoleucine + ATP = L-isoleucyl-tRNA(Ile) + AMP + diphosphate. Catalyzes the attachment of isoleucine to tRNA(Ile). As IleRS can inadvertently accommodate and process structurally similar amino acids such as valine, to avoid such errors it has two additional distinct tRNA(Ile)-dependent editing activities. One activity is designated as 'pretransfer' editing and involves the hydrolysis of activated Val-AMP. The other activity is designated 'posttransfer' editing and involves deacylation of mischarged Val-tRNA(Ile). This Haemophilus influenzae (strain ATCC 51907 / DSM 11121 / KW20 / Rd) protein is Isoleucine--tRNA ligase.